Here is a 1915-residue protein sequence, read N- to C-terminus: Ankyrin repeat domain-containing protein 36A (1915 aa).

ANK repeat units lie at residues 31 to 60 (YHLK…DANK), 64 to 93 (KERT…ELNL), 97 to 126 (EDRT…NPNI), 130 to 159 (FGRT…NIEE), 163 to 192 (CEYQ…NVNA), and 196 to 225 (LGRS…DVLS). Disordered regions lie at residues 261 to 331 (PINS…DEQK), 470 to 619 (ATGQ…QKQS), 639 to 663 (MGGG…DKTD), 676 to 1203 (LQCG…KATS), and 1285 to 1304 (KDVQ…SEGE). Composition is skewed to polar residues over residues 262–272 (INSNPVSSQKQ) and 297–306 (KSGTVSSQKQ). Residues 505–521 (SLTSSEESSERPPLSTL) are compositionally biased toward low complexity. Basic and acidic residues-rich tracts occupy residues 551-562 (PAEKATSDDKDS) and 585-596 (PAEKATSDEKDS). Composition is skewed to polar residues over residues 597-619 (VSNI…QKQS) and 645-657 (GTVS…ASKA). 7 stretches are compositionally biased toward basic and acidic residues: residues 806-815 (RENKDGEKSR), 874-883 (RENKDGEKSR), 931-951 (SDEK…EISR), 976-985 (RENKDGEKSR), 1044-1053 (RENKDGEKSR), 1100-1121 (TSDE…EKSR), and 1134-1152 (ICDK…KDEQ). The segment covering 1175-1196 (VSNIPTEIKDGQQSGTVSSQKQ) has biased composition (polar residues). 4 coiled-coil regions span residues 1383–1466 (IKLK…TEEQ), 1504–1531 (KEDL…IKNQ), 1573–1614 (LAAL…ARCD), and 1727–1814 (NMLL…KRDD). Positions 1489–1508 (KTGGNNSNQVSETDEKEDLL) are disordered.

It belongs to the ANKRD36 family.

This chain is Ankyrin repeat domain-containing protein 36A (ANKRD36), found in Homo sapiens (Human).